Reading from the N-terminus, the 464-residue chain is Protein FAM90A14 (464 aa).

Disordered stretches follow at residues 1 to 42 (MMAR…DPRL), 70 to 389 (PATL…HDGA), and 411 to 437 (APSF…SEAP). Basic and acidic residues-rich tracts occupy residues 74–89 (GKKE…KPRV) and 97–114 (NKDK…DPQR). Residues 180-197 (LASLSPLRKASLSSSSSL) show a composition bias toward low complexity.

It belongs to the FAM90 family.

The protein is Protein FAM90A14 of Homo sapiens (Human).